A 124-amino-acid chain; its full sequence is Putative membrane protein insertion efficiency factor (124 aa).

Positions 1–24 are disordered; it reads MHDPHGHAHTVRPPGRGRNWPGPW. Low complexity predominate over residues 12–24; it reads RPPGRGRNWPGPW.

Belongs to the UPF0161 family.

The protein resides in the cell inner membrane. Could be involved in insertion of integral membrane proteins into the membrane. In Mesorhizobium japonicum (strain LMG 29417 / CECT 9101 / MAFF 303099) (Mesorhizobium loti (strain MAFF 303099)), this protein is Putative membrane protein insertion efficiency factor.